The chain runs to 183 residues: Ribosome-recycling factor (183 aa).

It belongs to the RRF family.

The protein localises to the cytoplasm. In terms of biological role, responsible for the release of ribosomes from messenger RNA at the termination of protein biosynthesis. May increase the efficiency of translation by recycling ribosomes from one round of translation to another. The polypeptide is Ribosome-recycling factor (Ureaplasma parvum serovar 3 (strain ATCC 27815 / 27 / NCTC 11736)).